A 554-amino-acid chain; its full sequence is MRIAASTVLFGAASAASFQQQAQHVLSGGFGKAQEAMKPISDAFTDAAGRPFESFEDAFSGMTAETKALWEEIKLLVPDSAFKDLSWLSKPKPHHRRDDWNHVVKGADVQGMWVQDANGKSHRQVDGRLEEYNLRVKAVDPSKLNVDSVKQYSGYLDDEANDKHLFYWFFESRNDPKNDPVILWLNGGPGCSSLTGLFLELGPSSIDKTLKVVNNDFSWNNNASVIFLDQPVNVGYSYSGSSVSNTVAAGKDVYALLTLFFHQFPEYAKQDFHIAGESYAGHYIPVFASEILAHKNRNINLKSVLIGNGLTDGLTQYEHYRPMACGEGGYPAVLGEAECRSMDNALPRCQSLINNCYESGSVWSCVPASIYCNNAMIGPYQRTGRNVYDIRGPCEDSSNLCYSGLGYISDYLNQQSVMDALGVEVSSYDSCNFDINRNFLFQGDWMQPFHRLVPKILEEIPVLIYAGDADYICNWLGNRAWTEALEWPGKKDFNAAKVKDLKLSGAEKEYGKVKASGNFTFMQVYQAGHMVPMDQPENSLDFLNRWLNGEWFAK.

An N-terminal signal peptide occupies residues 1 to 17 (MRIAASTVLFGAASAAS). The propeptide occupies 18 to 137 (FQQQAQHVLS…RLEEYNLRVK (120 aa)). 5 disulfide bridges follow: Cys191/Cys431, Cys325/Cys339, Cys349/Cys372, Cys356/Cys365, and Cys394/Cys401. Residue Asn222 is glycosylated (N-linked (GlcNAc...) asparagine). Residue Ser278 is part of the active site. Asp470 is a catalytic residue. N-linked (GlcNAc...) asparagine glycosylation occurs at Asn518. Residue His529 is part of the active site.

The protein belongs to the peptidase S10 family.

The protein resides in the vacuole. The catalysed reaction is Release of a C-terminal amino acid with broad specificity.. Its function is as follows. Vacuolar carboxypeptidase involved in degradation of small peptides. Digests preferentially peptides containing an aliphatic or hydrophobic residue in P1' position, as well as methionine, leucine or phenylalanine in P1 position of ester substrate. The protein is Carboxypeptidase Y homolog A (CPYA) of Chaetomium globosum (strain ATCC 6205 / CBS 148.51 / DSM 1962 / NBRC 6347 / NRRL 1970) (Soil fungus).